A 322-amino-acid polypeptide reads, in one-letter code: MASEIPYDESPSGEESGEIKCKNIVTDPVRGLKICADTGEIIGEDIIGTESDVKAYTPEERQQKTHYGGPLKYSHHYMGVEASLEHPRDHGPKGIKQRKILPRRPPRLSARPLTSVDKNLQTALSLINEVASRMGMPEIVVEDASKIYREAMEKGLTRGRSIESIVAASLYAASRIHGLPHSLTDIIKAMKGNVDAETRRDVARSYRLLVRDLNIKIPVRKPENFVYTIISALGLPEHVAIEAIKIIDLSRKKGLTAGKDPGGLAGAAVYLAALKHGIRKTQKEIAHVVGVTEVTIRNRYKEIAQALGIEEELEEKGGEEKG.

2 consecutive repeat copies span residues Ser125–Leu213 and Asn224–Gln305.

The protein belongs to the TFIIB family.

Functionally, stabilizes TBP binding to an archaeal box-A promoter. Also responsible for recruiting RNA polymerase II to the pre-initiation complex (DNA-TBP-TFIIB). The polypeptide is Transcription initiation factor IIB (Aeropyrum pernix (strain ATCC 700893 / DSM 11879 / JCM 9820 / NBRC 100138 / K1)).